Reading from the N-terminus, the 125-residue chain is Histone H2A (125 aa).

Basic residues predominate over residues 1-18 (MSGRGKGGKAKAKAKSRS). Residues 1-21 (MSGRGKGGKAKAKAKSRSSRA) are disordered. The residue at position 2 (S2) is an N-acetylserine. Q104 bears the N5-methylglutamine mark.

This sequence belongs to the histone H2A family. As to quaternary structure, the nucleosome is a histone octamer containing two molecules each of H2A, H2B, H3 and H4 assembled in one H3-H4 heterotetramer and two H2A-H2B heterodimers. The octamer wraps approximately 147 bp of DNA.

The protein resides in the nucleus. It is found in the chromosome. Functionally, core component of nucleosome. Nucleosomes wrap and compact DNA into chromatin, limiting DNA accessibility to the cellular machineries which require DNA as a template. Histones thereby play a central role in transcription regulation, DNA repair, DNA replication and chromosomal stability. DNA accessibility is regulated via a complex set of post-translational modifications of histones, also called histone code, and nucleosome remodeling. This is Histone H2A from Mytilus californianus (California mussel).